The primary structure comprises 116 residues: uncharacterized protein (116 aa).

Residues 97–116 (AKGKGNEGREEAEEASGKSK) form a disordered region. Basic and acidic residues predominate over residues 100–116 (KGNEGREEAEEASGKSK).

This sequence belongs to the UPF0440 family.

This is an uncharacterized protein from Pyrococcus horikoshii (strain ATCC 700860 / DSM 12428 / JCM 9974 / NBRC 100139 / OT-3).